The following is a 277-amino-acid chain: Anamorsin homolog (277 aa).

Residues M1–K160 are N-terminal SAM-like domain. The segment at S161–L188 is linker. [2Fe-2S] cluster is bound by residues C199, C208, C211, and C213. The fe-S binding site A stretch occupies residues C199–C213. [4Fe-4S] cluster contacts are provided by C238, C241, C249, and C252. 2 consecutive short sequence motifs (cx2C motif) follow at residues C238–C241 and C249–C252. The interval C238–C252 is fe-S binding site B.

This sequence belongs to the anamorsin family. Monomer. The cofactor is [2Fe-2S] cluster. [4Fe-4S] cluster is required as a cofactor.

Its subcellular location is the cytoplasm. The protein resides in the mitochondrion intermembrane space. In terms of biological role, component of the cytosolic iron-sulfur (Fe-S) protein assembly (CIA) machinery. Required for the maturation of extramitochondrial Fe-S proteins. Part of an electron transfer chain functioning in an early step of cytosolic Fe-S biogenesis, facilitating the de novo assembly of a [4Fe-4S] cluster on the cytosolic Fe-S scaffold complex. Electrons are transferred from NADPH via a FAD- and FMN-containing diflavin oxidoreductase. Together with the diflavin oxidoreductase, also required for the assembly of the diferric tyrosyl radical cofactor of ribonucleotide reductase (RNR), probably by providing electrons for reduction during radical cofactor maturation in the catalytic small subunit. The sequence is that of Anamorsin homolog from Populus trichocarpa (Western balsam poplar).